Here is a 3970-residue protein sequence, read N- to C-terminus: Polyketide synthase-nonribosomal peptide synthetase hybrid himA (3970 aa).

The 436-residue stretch at Ser8–Ser443 folds into the Ketosynthase family 3 (KS3) domain. Residues Cys181, His320, and His363 each act as for beta-ketoacyl synthase activity in the active site. Residues Ile561–Arg876 are malonyl-CoA:ACP transacylase (MAT) domain. The interval His949 to Pro1083 is N-terminal hotdog fold. The interval His949–Thr1253 is dehydratase (DH) domain. The region spanning His949–Ala1256 is the PKS/mFAS DH domain. Residue His981 is the Proton acceptor; for dehydratase activity of the active site. The interval Gly1098–Ala1256 is C-terminal hotdog fold. Asp1158 functions as the Proton donor; for dehydratase activity in the catalytic mechanism. The ketoreductase (KR) domain stretch occupies residues Thr2060–Ser2234. Positions Ala2342–Leu2419 constitute a Carrier 1 domain. Ser2379 is subject to O-(pantetheine 4'-phosphoryl)serine. Positions Phe2420–Cys2482 are disordered. Residues Gly2445–Asp2466 show a composition bias toward low complexity. The span at Asp2467–Asp2477 shows a compositional bias: acidic residues. The tract at residues Pro2487–Thr2919 is condensation (C) domain. The segment at Ser2974–Lys3381 is adenylation (A) domain. Residues Arg3466 to Asp3495 form a disordered region. The segment covering Gly3472–Ala3492 has biased composition (acidic residues). Residues Thr3496–Val3574 form the Carrier 2 domain. Ser3534 carries the post-translational modification O-(pantetheine 4'-phosphoryl)serine. A reductase (R) domain region spans residues Leu3633 to Glu3866.

This sequence in the C-terminal section; belongs to the NRP synthetase family.

It functions in the pathway secondary metabolite biosynthesis. Its function is as follows. Polyketide synthase-nonribosomal peptide synthetase hybrid; part of the him gene cluster that mediates the biosynthesis of himeic acid A, a ubiquitin-activating enzyme (E1) inhibitor. First, himA, together with the trans-enoyl reductase himH, catalyzes the formation of apolyketide chain, which is then condensed with leucine by the NRPS activity of himA. Dieckmann cyclization and release from himA gives a tetramic acid intermediate as the product of himA PKS-NRPS. HimG then catalyzes alpha-oxidation of the tetramic acid ring, with a subsequent rearrangement to yield apyrone intermediate. Two terminal methyl groups of polyketide and amide side chains are oxidized to carboxylic acids by himC cytochrome P450 monooxygenase to form himeic acid A. Himeic acid A is further converted to himeic acids B and C during culture growth. No gene responsible for pyrone to pyridone conversion was found in the him gene cluster and himeic acid A is non-enzymatically converted to himeic acid C by the incorporation of an ammonium nitrogen atom in a pH5 buffer, and to himeic acid B at a conversion ratio of 50% during incubation in MeOH for 5 days. The sequence is that of Polyketide synthase-nonribosomal peptide synthetase hybrid himA from Aspergillus japonicus.